An 896-amino-acid polypeptide reads, in one-letter code: C-type lectin domain-containing protein 180 (896 aa).

The first 18 residues, 1 to 18 (MRHLIFTGFVLTLTALEA), serve as a signal peptide directing secretion. Residues 54 to 178 (PWGDLYQFRA…CESTSPDHHA (125 aa)) form the C-type lectin domain. An N-linked (GlcNAc...) asparagine glycan is attached at N133. C154 and C169 form a disulfide bridge. N-linked (GlcNAc...) asparagine glycans are attached at residues N221 and N235. 4 disordered regions span residues 243-264 (STVK…SVSK), 354-436 (VKQE…LAPE), 492-519 (EKLE…EEQK), and 557-809 (KVKA…TTKP). Residues 250-260 (SEEETSSEEEE) are compositionally biased toward acidic residues. Basic and acidic residues-rich tracts occupy residues 354–382 (VKQE…KISE) and 395–406 (DMPKADIEPPKE). Residues 407–426 (EDCDEEGSGSGSGEEDEKDE) show a composition bias toward acidic residues. Over residues 427–436 (SSEKIELAPE) the composition is skewed to basic and acidic residues. Composition is skewed to basic and acidic residues over residues 575 to 590 (KSAK…KVGN), 607 to 663 (QNRE…ETKL), and 683 to 692 (EEPKSDKDSE). The span at 727-739 (STTTESTTVAVKE) shows a compositional bias: low complexity. The span at 740-768 (VPVDEIEKIAKLEAKQHTEDEKVTVETKQ) shows a compositional bias: basic and acidic residues. A compositionally biased stretch (low complexity) spans 773–809 (TPAPTTSEKTSTTAAPSTKPAEETTTTTEAPSTTTKP).

The protein localises to the secreted. The chain is C-type lectin domain-containing protein 180 (clec-180) from Caenorhabditis elegans.